Reading from the N-terminus, the 365-residue chain is uncharacterized protein (365 aa).

Disordered stretches follow at residues 218-262 and 315-342; these read QRPS…AEAA and PRLPEPPVPPDGSGSRMEFRNLSDRTPC. Composition is skewed to basic and acidic residues over residues 239–257 and 331–341; these read PDNRVQEHREELSQTKDPE and MEFRNLSDRTP.

This is an uncharacterized protein from Mus musculus (Mouse).